Here is a 260-residue protein sequence, read N- to C-terminus: Snake venom serine protease homolog KN4 (260 aa).

Positions 1–18 are cleaved as a signal peptide; the sequence is MVLIRVLANLLILQLSYA. Residues 19–24 constitute a propeptide that is removed on maturation; the sequence is QKSSEL. Residues 25-251 enclose the Peptidase S1 domain; it reads IIGGDECNIN…HLDWIQNIIA (227 aa). Disulfide bonds link Cys-31–Cys-165, Cys-52–Cys-68, Cys-100–Cys-258, Cys-144–Cys-212, Cys-176–Cys-191, and Cys-202–Cys-227. N-linked (GlcNAc...) asparagine glycosylation is found at Asn-83, Asn-123, Asn-124, Asn-156, and Asn-172. Residue Asn-253 is glycosylated (N-linked (GlcNAc...) asparagine).

The protein belongs to the peptidase S1 family. Snake venom subfamily. As to expression, expressed by the venom gland.

Its subcellular location is the secreted. Its function is as follows. Snake venom serine protease homolog that may act in the hemostasis system of the prey. This is Snake venom serine protease homolog KN4 from Trimeresurus stejnegeri (Chinese green tree viper).